Consider the following 345-residue polypeptide: Myb/SANT-like DNA-binding domain-containing protein 4 (345 aa).

The 74-residue stretch at 4 to 77 folds into the Myb-like domain; the sequence is LKRKRKSNFS…EVKRRYLDWR (74 aa). A Glycyl lysine isopeptide (Lys-Gly) (interchain with G-Cter in SUMO2) cross-link involves residue lysine 9. At serine 106 the chain carries Phosphoserine. Glycyl lysine isopeptide (Lys-Gly) (interchain with G-Cter in SUMO2) cross-links involve residues lysine 114 and lysine 142. Positions 143-175 are disordered; it reads VEEEERDPQSPEFEIEEEEEMLSSVIPDSRREN. Phosphothreonine is present on threonine 188. Residues 203–345 are a coiled coil; it reads LLVNIEKQKL…LRIQKEGHLQ (143 aa). Residues lysine 237, lysine 254, and lysine 273 each participate in a glycyl lysine isopeptide (Lys-Gly) (interchain with G-Cter in SUMO2) cross-link.

This chain is Myb/SANT-like DNA-binding domain-containing protein 4 (MSANTD4), found in Homo sapiens (Human).